We begin with the raw amino-acid sequence, 320 residues long: MLYRRNPQLNKNGELIHLLSIEGLPKAILTQILDTAANFVSVNNREVKKVPLLRGKSVFNLFFENSTRTRTTFEIAATRLSADVINLDIARSSASKGESLLDTIANLSAMAADLFVVRHGESGAPYLIAQHVAPHVHVINAGDGRHAHPTQGLLDMYTIRHYKKDFSNLTVAIVGDVLHSRVARSDIHALTTLGCPEVRVVGPKTLVPADMAQMGVRVCNTLEEGIKGADVIIMLRLQNERMSGALLPSSQEFFKSFGLTNEKLQLAKPDAIVMHPGPINRGVEIDSAVVDGTQSVILPQVTFGIAVRMAVMGIVAGNEA.

Residues Arg-68 and Thr-69 each contribute to the carbamoyl phosphate site. Residue Lys-96 coordinates L-aspartate. Residues Arg-118, His-148, and Gln-151 each coordinate carbamoyl phosphate. Positions 181 and 236 each coordinate L-aspartate. The carbamoyl phosphate site is built by Gly-277 and Pro-278.

This sequence belongs to the aspartate/ornithine carbamoyltransferase superfamily. ATCase family. In terms of assembly, heterododecamer (2C3:3R2) of six catalytic PyrB chains organized as two trimers (C3), and six regulatory PyrI chains organized as three dimers (R2).

It catalyses the reaction carbamoyl phosphate + L-aspartate = N-carbamoyl-L-aspartate + phosphate + H(+). Its pathway is pyrimidine metabolism; UMP biosynthesis via de novo pathway; (S)-dihydroorotate from bicarbonate: step 2/3. Catalyzes the condensation of carbamoyl phosphate and aspartate to form carbamoyl aspartate and inorganic phosphate, the committed step in the de novo pyrimidine nucleotide biosynthesis pathway. The chain is Aspartate carbamoyltransferase catalytic subunit from Polaromonas sp. (strain JS666 / ATCC BAA-500).